A 146-amino-acid chain; its full sequence is Hemoglobin subunit beta (146 aa).

The Globin domain maps to 2–146; that stretch reads HWTAEEKQLI…VAHALARKYH (145 aa). The heme b site is built by H63 and H92.

Belongs to the globin family. In terms of assembly, heterotetramer of two alpha chains and two beta chains. Red blood cells.

In terms of biological role, involved in oxygen transport from the lung to the various peripheral tissues. The protein is Hemoglobin subunit beta (HBB) of Aquila chrysaetos (Golden eagle).